The primary structure comprises 334 residues: BRISC and BRCA1-A complex member 1 (334 aa).

Residue M1 is modified to N-acetylmethionine. Residues 1-79 (MEVAEANSPT…VPGAVPKPWQ (79 aa)) are disordered. S8 bears the Phosphoserine mark. Residues 10-25 (TEEEEEEEEEEGEEPI) are compositionally biased toward acidic residues. Phosphoserine occurs at positions 34 and 54. Over residues 59-68 (EAATADDGAA) the composition is skewed to low complexity. The segment at 100-303 (VIICLDLSEE…LELHNCVAKL (204 aa)) is VWFA-like.

The protein belongs to the BABAM1 family. In terms of assembly, component of the ARISC complex, at least composed of UIMC1/RAP80, ABRAXAS1, BRCC3/BRCC36, BABAM2 and BABAM1/NBA1. Component of the BRCA1-A complex, at least composed of BRCA1, BARD1, UIMC1/RAP80, ABRAXAS1, BRCC3/BRCC36, BABAM2 and BABAM1/NBA1. In the BRCA1-A complex, interacts directly with ABRAXAS1 and BABAM2. Component of the BRISC complex, at least composed of ABRAXAS2, BRCC3/BRCC36, BABAM2 and BABAM1/NBA1. Identified in a complex with SHMT2 and the other subunits of the BRISC complex.

It localises to the cytoplasm. The protein resides in the nucleus. Its function is as follows. Component of the BRCA1-A complex, a complex that specifically recognizes 'Lys-63'-linked ubiquitinated histones H2A and H2AX at DNA lesions sites, leading to target the BRCA1-BARD1 heterodimer to sites of DNA damage at double-strand breaks (DSBs). The BRCA1-A complex also possesses deubiquitinase activity that specifically removes 'Lys-63'-linked ubiquitin on histones H2A and H2AX. In the BRCA1-A complex, it is required for the complex integrity and its localization at DSBs. Component of the BRISC complex, a multiprotein complex that specifically cleaves 'Lys-63'-linked ubiquitin in various substrates. In these 2 complexes, it is probably required to maintain the stability of BABAM2 and help the 'Lys-63'-linked deubiquitinase activity mediated by BRCC3/BRCC36 component. The BRISC complex is required for normal mitotic spindle assembly and microtubule attachment to kinetochores via its role in deubiquitinating NUMA1. Plays a role in interferon signaling via its role in the deubiquitination of the interferon receptor IFNAR1; deubiquitination increases IFNAR1 activity by enhancing its stability and cell surface expression. Down-regulates the response to bacterial lipopolysaccharide (LPS) via its role in IFNAR1 deubiquitination. This is BRISC and BRCA1-A complex member 1 (Babam1) from Rattus norvegicus (Rat).